The primary structure comprises 419 residues: MVEQDPFEIAVKQLERAAQYMDISEEALEFLKRPQRIVEVSIPVEMDDGSVKVFTGFRVQYNWARGPTKGGIRWHPEETLSTVKALAAWMTWKTAVMDLPYGGGKGGVICNPKEMSDREKERLARGYVRAIYDVISPYTDIPAPDVYTNPQIMAWMMDEYETISRRKDPSFGVITGKPPSVGGIVARMDATARGASYTVREAAKALGMDLKGKTIAIQGYGNAGYYMAKIMSEEYGMKVVAVSDSKGGIYNPDGLNADEVLAWKKKTGSVKDFPGATNITNEELLELEVDVLAPSAIEEVITKKNADNIKAKIVAELANGPTTPEADEILYEKGILIIPDFLCNAGGVTVSYFEWVQNITGDYWTVEETRAKLDKKMTKAFWDVYNTHKEKNINMRDAAYVVAVSRVYQAMKDRGWIKK.

Lys-105 is an active-site residue. 219–225 (GYGNAGY) serves as a coordination point for NAD(+).

This sequence belongs to the Glu/Leu/Phe/Val dehydrogenases family. Homohexamer.

The protein resides in the cytoplasm. The catalysed reaction is L-glutamate + NAD(+) + H2O = 2-oxoglutarate + NH4(+) + NADH + H(+). It carries out the reaction L-glutamate + NADP(+) + H2O = 2-oxoglutarate + NH4(+) + NADPH + H(+). This Thermococcus litoralis (strain ATCC 51850 / DSM 5473 / JCM 8560 / NS-C) protein is Glutamate dehydrogenase (gdhA).